Here is a 294-residue protein sequence, read N- to C-terminus: Cytidine deaminase (294 aa).

CMP/dCMP-type deaminase domains follow at residues 48–168 (DEDA…FGPK) and 186–294 (LTGD…VLLG). Substrate is bound at residue 89–91 (NME). His-102 contacts Zn(2+). The active-site Proton donor is the Glu-104. Residues Cys-129 and Cys-132 each contribute to the Zn(2+) site.

The protein belongs to the cytidine and deoxycytidylate deaminase family. In terms of assembly, homodimer. Requires Zn(2+) as cofactor.

It carries out the reaction cytidine + H2O + H(+) = uridine + NH4(+). The enzyme catalyses 2'-deoxycytidine + H2O + H(+) = 2'-deoxyuridine + NH4(+). This enzyme scavenges exogenous and endogenous cytidine and 2'-deoxycytidine for UMP synthesis. The polypeptide is Cytidine deaminase (Salmonella newport (strain SL254)).